The following is a 314-amino-acid chain: Coiled-coil domain-containing protein 42 like-2 (314 aa).

Coiled coils occupy residues 34-133 (RLLE…KGTL) and 175-231 (NKLL…FQWE).

Belongs to the CFAP73 family.

The protein is Coiled-coil domain-containing protein 42 like-2 of Xenopus tropicalis (Western clawed frog).